Reading from the N-terminus, the 596-residue chain is Succinate dehydrogenase flavoprotein subunit (596 aa).

Residues 18-23 (GAGGAG), 41-56 (TKLFPTRSHTVAAQGG), and D225 each bind FAD. At H49 the chain carries Tele-8alpha-FAD histidine. Substrate is bound by residues H246 and T258. The active-site Proton acceptor is the R290. H357 provides a ligand contact to substrate. E391 lines the FAD pocket. R402 provides a ligand contact to substrate. Residue 407–408 (SL) coordinates FAD.

Belongs to the FAD-dependent oxidoreductase 2 family. FRD/SDH subfamily. As to quaternary structure, part of an enzyme complex containing four subunits: a flavoprotein, an iron-sulfur, cytochrome b-556, and a hydrophobic anchor protein. FAD is required as a cofactor.

The protein localises to the cell inner membrane. It carries out the reaction a quinone + succinate = fumarate + a quinol. Its pathway is carbohydrate metabolism; tricarboxylic acid cycle; fumarate from succinate (bacterial route): step 1/1. The chain is Succinate dehydrogenase flavoprotein subunit (sdhA) from Rickettsia felis (strain ATCC VR-1525 / URRWXCal2) (Rickettsia azadi).